The chain runs to 716 residues: Putative proline--tRNA ligase C19C7.06 (716 aa).

The interval 655-675 (KNSARQVNGDEPEDEKAPSMG) is disordered.

Belongs to the class-II aminoacyl-tRNA synthetase family.

It is found in the cytoplasm. The catalysed reaction is tRNA(Pro) + L-proline + ATP = L-prolyl-tRNA(Pro) + AMP + diphosphate. In Schizosaccharomyces pombe (strain 972 / ATCC 24843) (Fission yeast), this protein is Putative proline--tRNA ligase C19C7.06 (prs1).